Consider the following 175-residue polypeptide: Inorganic pyrophosphatase (175 aa).

The substrate site is built by K30, R44, and Y56. D66, D71, and D103 together coordinate Mg(2+). Y142 serves as a coordination point for substrate.

Belongs to the PPase family. As to quaternary structure, homohexamer. Mg(2+) serves as cofactor.

It localises to the cytoplasm. It catalyses the reaction diphosphate + H2O = 2 phosphate + H(+). In terms of biological role, catalyzes the hydrolysis of inorganic pyrophosphate (PPi) forming two phosphate ions. This is Inorganic pyrophosphatase from Haemophilus ducreyi (strain 35000HP / ATCC 700724).